Reading from the N-terminus, the 537-residue chain is uncharacterized protein (537 aa).

Residues 10–56 form a disordered region; sequence HHDVEPQNVEEEPPLTGQTIVTEDKLETSAKDKKHESPSMSEDEEGS. Basic and acidic residues predominate over residues 31–46; sequence TEDKLETSAKDKKHES. 12 helical membrane passes run 90–110, 133–153, 156–176, 180–200, 213–233, 243–263, 313–333, 348–368, 393–413, 422–442, 457–477, and 492–512; these read FVAT…TACI, LFIV…DIFG, WVYV…ALAY, MMAI…ANVA, GFGI…GSPI, WFYW…VLCP, PIIM…FLYL, YMGA…VVML, FLIS…FAFT, SPLI…LAMI, IAAF…LGII, and AFIS…GHLI.

It belongs to the major facilitator superfamily. CAR1 family.

Its subcellular location is the endoplasmic reticulum. The protein localises to the golgi apparatus. It is found in the membrane. This is an uncharacterized protein from Schizosaccharomyces pombe (strain 972 / ATCC 24843) (Fission yeast).